The primary structure comprises 228 residues: RNA pyrophosphohydrolase (228 aa).

The interval 1–70 (MEKRSGIGRL…KQWVKMMNDI (70 aa)) is unknown. The tract at residues 71–228 (VIDKRGFRLG…VLTEFAEFIR (158 aa)) is rppH domain. The Nudix hydrolase domain occupies 76 to 221 (GFRLGVGMVI…KRDVYQKVLT (146 aa)). Positions 109 to 130 (GGLLPNETLREALNRELDEEVG) match the Nudix box motif.

It in the C-terminal section; belongs to the Nudix hydrolase family. RppH subfamily. A divalent metal cation serves as cofactor.

Accelerates the degradation of transcripts by removing pyrophosphate from the 5'-end of triphosphorylated RNA, leading to a more labile monophosphorylated state that can stimulate subsequent ribonuclease cleavage. In Coxiella burnetii (strain RSA 493 / Nine Mile phase I), this protein is RNA pyrophosphohydrolase.